The sequence spans 171 residues: Nicotinamide-nucleotide adenylyltransferase (171 aa).

Belongs to the archaeal NMN adenylyltransferase family.

It localises to the cytoplasm. The enzyme catalyses beta-nicotinamide D-ribonucleotide + ATP + H(+) = diphosphate + NAD(+). The protein operates within cofactor biosynthesis; NAD(+) biosynthesis; NAD(+) from nicotinamide D-ribonucleotide: step 1/1. The chain is Nicotinamide-nucleotide adenylyltransferase from Ignicoccus hospitalis (strain KIN4/I / DSM 18386 / JCM 14125).